The chain runs to 52 residues: Ribosome biogenesis protein Nop10 (52 aa).

Belongs to the NOP10 family.

Involved in ribosome biogenesis; more specifically in 18S rRNA pseudouridylation and in cleavage of pre-rRNA. The sequence is that of Ribosome biogenesis protein Nop10 from Methanococcus vannielii (strain ATCC 35089 / DSM 1224 / JCM 13029 / OCM 148 / SB).